A 349-amino-acid polypeptide reads, in one-letter code: MASDDRPLALTLGDPSGIGPEIALAAWQLRGERGVPPFQLIGDPEFLEATAYRLGLSVPVAEVEPDDACEVFPRALPVLPLPSGAKVIATPGAPDSANAGAIVESITAAVDLVRSGAASAVVTNPIAKFVLTRVGFAHPGHTEFLAALAAREGREPPLPVMMIWSDTLAVVPVTIHVALRRVPELLTQDLVERTARIVHADLRARFGLEHPRLVLSGLNPHAGESGTMGTEDRDVLAPAVAVLRSEGIDIRGPLPADTLFHERARATYDVALTPTHDQALIPVKTLAFDEGVNVTLGLPFVRTSPDHGTAFDIAGKGIAKPDSLIAALRLAHRLAHRPADTVLPFPVRA.

Substrate-binding residues include His-141 and Thr-142. A divalent metal cation contacts are provided by His-176, His-221, and His-276. Positions 284, 293, and 302 each coordinate substrate.

Belongs to the PdxA family. In terms of assembly, homodimer. Zn(2+) serves as cofactor. The cofactor is Mg(2+). It depends on Co(2+) as a cofactor.

The protein localises to the cytoplasm. The enzyme catalyses 4-(phosphooxy)-L-threonine + NAD(+) = 3-amino-2-oxopropyl phosphate + CO2 + NADH. The protein operates within cofactor biosynthesis; pyridoxine 5'-phosphate biosynthesis; pyridoxine 5'-phosphate from D-erythrose 4-phosphate: step 4/5. Catalyzes the NAD(P)-dependent oxidation of 4-(phosphooxy)-L-threonine (HTP) into 2-amino-3-oxo-4-(phosphooxy)butyric acid which spontaneously decarboxylates to form 3-amino-2-oxopropyl phosphate (AHAP). The polypeptide is 4-hydroxythreonine-4-phosphate dehydrogenase (Methylorubrum extorquens (strain PA1) (Methylobacterium extorquens)).